Reading from the N-terminus, the 223-residue chain is All-trans retinoic acid-induced differentiation factor (223 aa).

The signal sequence occupies residues 1-25 (MASRESGGSRAAALLLVLGVERALA). Over 26-193 (LPEICTLCPG…YKCMRQGSFS (168 aa)) the chain is Extracellular. In terms of domain architecture, EGF-like spans 146-187 (QRDLCNSTGSPEMCPENGSCASDGPGLLQCVCADGFHGYKCM). 3 disulfide bridges follow: Cys-150/Cys-165, Cys-159/Cys-175, and Cys-177/Cys-186. The helical transmembrane segment at 194-214 (LLMFFGILGSTTLAISILLWG) threads the bilayer. The Cytoplasmic segment spans residues 215 to 223 (TQRRKAKAS).

In terms of assembly, interacts with NELL1; the interaction promotes osteoblastic differentiation and mineralization. Interacts with SLC37A3; the interaction is direct and both proteins are mutually dependent for their stability.

Its subcellular location is the nucleus envelope. The protein localises to the cell membrane. It localises to the lysosome membrane. Its function is as follows. Promotes osteoblast cell differentiation and terminal mineralization. Plays a role in inducing the cell cycle arrest via inhibiting CCND1 expression in all-trans-retinoic acid (ATRA) signal pathway. In osteoclasts, forms a transporter complex with ATRAID for nitrogen-containing-bisphophonates (N-BPs) required for releasing N-BP molecules that have trafficked to lysosomes through fluid-phase endocytosis into the cytosol. This Mus musculus (Mouse) protein is All-trans retinoic acid-induced differentiation factor (Atraid).